Reading from the N-terminus, the 363-residue chain is Cytoplasmic tRNA 2-thiolation protein 1 (363 aa).

The tract at residues 337–363 is disordered; sequence DGDCEQQATRSERNRSSLQGKHGNFDF.

This sequence belongs to the TtcA family. CTU1/NCS6/ATPBD3 subfamily.

It is found in the cytoplasm. It functions in the pathway tRNA modification; 5-methoxycarbonylmethyl-2-thiouridine-tRNA biosynthesis. In terms of biological role, plays a central role in 2-thiolation of mcm(5)S(2)U at tRNA wobble positions of tRNA(Lys), tRNA(Glu) and tRNA(Gln). Directly binds tRNAs and probably acts by catalyzing adenylation of tRNAs, an intermediate required for 2-thiolation. It is unclear whether it acts as a sulfurtransferase that transfers sulfur from thiocarboxylated URM1 onto the uridine of tRNAs at wobble position. This chain is Cytoplasmic tRNA 2-thiolation protein 1, found in Oryza sativa subsp. japonica (Rice).